We begin with the raw amino-acid sequence, 861 residues long: E3 ubiquitin-protein ligase HECTD3 (861 aa).

A2 is subject to N-acetylalanine. The residue at position 12 (S12) is a Phosphoserine. The DOC domain maps to 219-397 (DEDLIHFLYD…TSLVRYPRLE (179 aa)). The HECT domain occupies 512–857 (YEKPLDYRWP…NCVAIDTDMS (346 aa)). Catalysis depends on C823, which acts as the Glycyl thioester intermediate.

In terms of assembly, interacts with TRIOBP. Interacts with STX8.

The protein resides in the cytoplasm. Its subcellular location is the perinuclear region. It catalyses the reaction S-ubiquitinyl-[E2 ubiquitin-conjugating enzyme]-L-cysteine + [acceptor protein]-L-lysine = [E2 ubiquitin-conjugating enzyme]-L-cysteine + N(6)-ubiquitinyl-[acceptor protein]-L-lysine.. It functions in the pathway protein modification; protein ubiquitination. Its function is as follows. E3 ubiquitin ligases accepts ubiquitin from an E2 ubiquitin-conjugating enzyme in the form of a thioester and then directly transfers the ubiquitin to targeted substrates. Mediates ubiquitination of TRIOBP and its subsequent proteasomal degradation, thus facilitating cell cycle progression by regulating the turn-over of TRIOBP. Mediates also ubiquitination of STX8. The sequence is that of E3 ubiquitin-protein ligase HECTD3 (HECTD3) from Homo sapiens (Human).